Reading from the N-terminus, the 488-residue chain is GTPase Der (488 aa).

EngA-type G domains are found at residues 3–166 (PVVA…VSDG) and 201–374 (IKLA…QCAT). GTP is bound by residues 9 to 16 (GRPNVGKS), 56 to 60 (DTGGI), 118 to 121 (NKTD), 207 to 214 (GRPNVGKS), 254 to 258 (DTAGV), and 319 to 322 (NKWD). The KH-like domain maps to 375 to 459 (KRVSTALLTR…PIRIQFNEGA (85 aa)).

It belongs to the TRAFAC class TrmE-Era-EngA-EngB-Septin-like GTPase superfamily. EngA (Der) GTPase family. In terms of assembly, associates with the 50S ribosomal subunit.

Functionally, GTPase that plays an essential role in the late steps of ribosome biogenesis. The chain is GTPase Der from Sodalis glossinidius (strain morsitans).